The sequence spans 57 residues: Small polypeptide DEVIL 20 (57 aa).

N5 is a glycosylation site (N-linked (GlcNAc...) asparagine). The required for DVL/RTFL small polypeptide activity stretch occupies residues 16–47 (TFKAKCSHMVRKQRAKFYILGRCLAMLVCGRG). Residues 29–45 (RAKFYILGRCLAMLVCG) form a helical membrane-spanning segment.

The protein belongs to the DVL/RTFL small polypeptides family.

Its subcellular location is the cell membrane. Small polypeptide acting as a regulatory molecule which coordinates cellular responses required for differentiation, growth and development, probably by restricting polar cell proliferation in lateral organs and coordinating socket cell recruitment and differentiation at trichome sites. The polypeptide is Small polypeptide DEVIL 20 (Arabidopsis thaliana (Mouse-ear cress)).